The primary structure comprises 91 residues: Mercuric transport protein periplasmic component (91 aa).

The N-terminal stretch at Met1–Ala19 is a signal peptide. The region spanning Gln22–Ser88 is the HMA domain. Hg(2+)-binding residues include Cys33 and Cys36.

The protein belongs to the MerP family. In terms of assembly, monomer.

The protein resides in the periplasm. Its function is as follows. Involved in mercury resistance. Acts as a mercury scavenger that specifically binds to a mercuric ion in the periplasm and probably passes it to the cytoplasmic mercuric reductase MerA via the mercuric transport protein MerT. This chain is Mercuric transport protein periplasmic component, found in Shigella flexneri.